Here is a 481-residue protein sequence, read N- to C-terminus: Ribosomal RNA small subunit methyltransferase F (481 aa).

S-adenosyl-L-methionine is bound by residues 119-125 (ASAPGSK), Glu-143, Asp-170, and Asp-188. The Nucleophile role is filled by Cys-241.

This sequence belongs to the class I-like SAM-binding methyltransferase superfamily. RsmB/NOP family.

Its subcellular location is the cytoplasm. It catalyses the reaction cytidine(1407) in 16S rRNA + S-adenosyl-L-methionine = 5-methylcytidine(1407) in 16S rRNA + S-adenosyl-L-homocysteine + H(+). Its function is as follows. Specifically methylates the cytosine at position 1407 (m5C1407) of 16S rRNA. In Shewanella sp. (strain MR-4), this protein is Ribosomal RNA small subunit methyltransferase F.